The chain runs to 237 residues: ATP synthase subunit a (237 aa).

Helical transmembrane passes span 18–38, 77–97, 103–123, 132–152, 185–205, and 209–229; these read STLW…VGTL, IFTL…PMAF, IAVT…LGFM, LFWV…IEVI, LILF…AIVA, and LEIL…CVYL.

The protein belongs to the ATPase A chain family. F-type ATPases have 2 components, CF(1) - the catalytic core - and CF(0) - the membrane proton channel. CF(1) has five subunits: alpha(3), beta(3), gamma(1), delta(1), epsilon(1). CF(0) has three main subunits: a(1), b(2) and c(9-12). The alpha and beta chains form an alternating ring which encloses part of the gamma chain. CF(1) is attached to CF(0) by a central stalk formed by the gamma and epsilon chains, while a peripheral stalk is formed by the delta and b chains.

The protein localises to the cellular chromatophore membrane. Key component of the proton channel; it plays a direct role in the translocation of protons across the membrane. The protein is ATP synthase subunit a of Rhodobacter capsulatus (Rhodopseudomonas capsulata).